The following is an 89-amino-acid chain: Small ribosomal subunit protein uS17 (89 aa).

It belongs to the universal ribosomal protein uS17 family. In terms of assembly, part of the 30S ribosomal subunit.

Functionally, one of the primary rRNA binding proteins, it binds specifically to the 5'-end of 16S ribosomal RNA. In Syntrophomonas wolfei subsp. wolfei (strain DSM 2245B / Goettingen), this protein is Small ribosomal subunit protein uS17.